Here is a 363-residue protein sequence, read N- to C-terminus: Actin-related protein 7 (363 aa).

Met1 bears the N-acetylmethionine mark.

This sequence belongs to the actin family. Plant ARP7 subfamily. As to expression, mostly expressed in flowers, and, to a lower extent, in roots, seedlings, leaves and siliques (at protein level).

It is found in the nucleus. Its subcellular location is the cytoplasm. Functionally, essential protein required during embryogenesis and all plant development stages, probably through a chromatin-mediated regulation of gene expression. This chain is Actin-related protein 7 (ARP7), found in Arabidopsis thaliana (Mouse-ear cress).